The primary structure comprises 231 residues: DNA mismatch repair protein MutH (231 aa).

Belongs to the MutH family.

The protein localises to the cytoplasm. Sequence-specific endonuclease that cleaves unmethylated GATC sequences. It is involved in DNA mismatch repair. This Salmonella enteritidis PT4 (strain P125109) protein is DNA mismatch repair protein MutH.